We begin with the raw amino-acid sequence, 481 residues long: Glycogen synthase (481 aa).

Lys-15 provides a ligand contact to ADP-alpha-D-glucose.

Belongs to the glycosyltransferase 1 family. Bacterial/plant glycogen synthase subfamily.

The enzyme catalyses [(1-&gt;4)-alpha-D-glucosyl](n) + ADP-alpha-D-glucose = [(1-&gt;4)-alpha-D-glucosyl](n+1) + ADP + H(+). Its pathway is glycan biosynthesis; glycogen biosynthesis. In terms of biological role, synthesizes alpha-1,4-glucan chains using ADP-glucose. The sequence is that of Glycogen synthase from Thermosipho melanesiensis (strain DSM 12029 / CIP 104789 / BI429).